Here is a 116-residue protein sequence, read N- to C-terminus: Large ribosomal subunit protein uL18 (116 aa).

The protein belongs to the universal ribosomal protein uL18 family. As to quaternary structure, part of the 50S ribosomal subunit; part of the 5S rRNA/L5/L18/L25 subcomplex. Contacts the 5S and 23S rRNAs.

Its function is as follows. This is one of the proteins that bind and probably mediate the attachment of the 5S RNA into the large ribosomal subunit, where it forms part of the central protuberance. This chain is Large ribosomal subunit protein uL18, found in Marinomonas sp. (strain MWYL1).